Reading from the N-terminus, the 266-residue chain is Norfluorocurarine synthase 2 (266 aa).

The 111-residue stretch at 11–121 (HFVLVHGAGH…IMPDSTHPPI (111 aa)) folds into the AB hydrolase-1 domain. Active-site residues include Ser86, Asp216, and His244.

This sequence belongs to the AB hydrolase superfamily. Homodimer. Mainly expressed in roots.

The catalysed reaction is 17-dehydropreakuammicine + H2O = norfluorocurarine + methanol + CO2. The protein operates within alkaloid biosynthesis. Its function is as follows. Hydrolase involved in the biosynthesis of curare monoterpene indole alkaloids (MIAs), natural products such as strychnine, a neurotoxic compound used as a pesticide to control rodents, and its pharmacologically active derivatives, including brucine, used to regulate blood pressure. Curare alkaloids act as animal glycine receptor antagonists. Catalyzes the conversion of dehydropreakuammicine to norfluorocurarine. This chain is Norfluorocurarine synthase 2, found in Strychnos nux-vomica (Poison nut).